The primary structure comprises 398 residues: tRNA-specific 2-thiouridylase MnmA (398 aa).

Residues 18-25 and leucine 44 contribute to the ATP site; that span reads AMSGGVDS. Catalysis depends on cysteine 112, which acts as the Nucleophile. An intrachain disulfide couples cysteine 112 to cysteine 213. Position 136 (glycine 136) interacts with ATP. The interaction with tRNA stretch occupies residues 163-165; that stretch reads RDQ. Cysteine 213 serves as the catalytic Cysteine persulfide intermediate.

It belongs to the MnmA/TRMU family.

The protein localises to the cytoplasm. It carries out the reaction S-sulfanyl-L-cysteinyl-[protein] + uridine(34) in tRNA + AH2 + ATP = 2-thiouridine(34) in tRNA + L-cysteinyl-[protein] + A + AMP + diphosphate + H(+). Its function is as follows. Catalyzes the 2-thiolation of uridine at the wobble position (U34) of tRNA, leading to the formation of s(2)U34. This is tRNA-specific 2-thiouridylase MnmA from Rhizobium meliloti (strain 1021) (Ensifer meliloti).